The chain runs to 494 residues: Putative bifunctional dihydrofolate reductase-thymidylate synthase (494 aa).

The 167-residue stretch at 1–167 folds into the DHFR domain; the sequence is MGIGKDGTLP…IKHSFISFVR (167 aa). 2–8 lines the NADP(+) pocket; that stretch reads GIGKDGT. D16 contacts substrate. Residues 40-42 and 61-64 each bind NADP(+); these read RKT and LTRS. Residue I103 participates in substrate binding. 104 to 111 lines the NADP(+) pocket; that stretch reads GGGEILRQ. Substrate is bound at residue T124. Positions 170–494 are thymidylate synthase; that stretch reads KSIAEANDSS…HHKIEMKMAV (325 aa). R231 lines the dUMP pocket. Residue C376 is part of the active site. DUMP-binding positions include H377, 395 to 399, N407, and 437 to 439; these read QRSAD and HVY.

It in the N-terminal section; belongs to the dihydrofolate reductase family. The protein in the C-terminal section; belongs to the thymidylate synthase family.

The enzyme catalyses (6S)-5,6,7,8-tetrahydrofolate + NADP(+) = 7,8-dihydrofolate + NADPH + H(+). It carries out the reaction dUMP + (6R)-5,10-methylene-5,6,7,8-tetrahydrofolate = 7,8-dihydrofolate + dTMP. It functions in the pathway cofactor biosynthesis; tetrahydrofolate biosynthesis; 5,6,7,8-tetrahydrofolate from 7,8-dihydrofolate: step 1/1. Bifunctional enzyme. Involved in de novo dTMP biosynthesis. Key enzyme in folate metabolism. Can play two different roles depending on the source of dihydrofolate: de novo synthesis of tetrahydrofolate or recycling of the dihydrofolate released as one of the end products of the TS catalyzed reaction. Catalyzes an essential reaction for de novo glycine and purine synthesis, DNA precursor synthesis, and for the conversion of dUMP to dTMP. The protein is Putative bifunctional dihydrofolate reductase-thymidylate synthase of Oryza sativa subsp. japonica (Rice).